A 216-amino-acid chain; its full sequence is Probable phosphatase SPAC513.02 (216 aa).

Residue histidine 15 is the Tele-phosphohistidine intermediate of the active site.

The protein belongs to the phosphoglycerate mutase family. BPG-dependent PGAM subfamily.

The protein resides in the cytoplasm. Its subcellular location is the nucleus. This Schizosaccharomyces pombe (strain 972 / ATCC 24843) (Fission yeast) protein is Probable phosphatase SPAC513.02.